The sequence spans 133 residues: Ribosome-binding factor A (133 aa).

Belongs to the RbfA family. As to quaternary structure, monomer. Binds 30S ribosomal subunits, but not 50S ribosomal subunits or 70S ribosomes.

The protein localises to the cytoplasm. Its function is as follows. One of several proteins that assist in the late maturation steps of the functional core of the 30S ribosomal subunit. Associates with free 30S ribosomal subunits (but not with 30S subunits that are part of 70S ribosomes or polysomes). Required for efficient processing of 16S rRNA. May interact with the 5'-terminal helix region of 16S rRNA. In Trichormus variabilis (strain ATCC 29413 / PCC 7937) (Anabaena variabilis), this protein is Ribosome-binding factor A.